Here is a 201-residue protein sequence, read N- to C-terminus: Recombination protein RecR (201 aa).

The C4-type zinc-finger motif lies at 57 to 72 (CSDCRTFTEQDVCAIC). Positions 81–176 (GQICVVESPA…MASRIAHGVP (96 aa)) constitute a Toprim domain.

The protein belongs to the RecR family.

In terms of biological role, may play a role in DNA repair. It seems to be involved in an RecBC-independent recombinational process of DNA repair. It may act with RecF and RecO. The protein is Recombination protein RecR of Pectobacterium carotovorum subsp. carotovorum (strain PC1).